A 686-amino-acid polypeptide reads, in one-letter code: Glycine--tRNA ligase beta subunit (686 aa).

The protein belongs to the class-II aminoacyl-tRNA synthetase family. As to quaternary structure, tetramer of two alpha and two beta subunits.

Its subcellular location is the cytoplasm. It carries out the reaction tRNA(Gly) + glycine + ATP = glycyl-tRNA(Gly) + AMP + diphosphate. The polypeptide is Glycine--tRNA ligase beta subunit (Halothermothrix orenii (strain H 168 / OCM 544 / DSM 9562)).